A 794-amino-acid polypeptide reads, in one-letter code: Lon protease (794 aa).

The region spanning 13 to 204 is the Lon N-terminal domain; the sequence is VPLYPLREII…KVYMHLTNEV (192 aa). 356–363 lines the ATP pocket; sequence GPPGVGKT. The Lon proteolytic domain maps to 592 to 773; sequence KDRVGVATGL…REVFVQALNP (182 aa). Catalysis depends on residues Ser679 and Lys722. Positions 774-788 are enriched in low complexity; it reads TSPAPTAATSARTPA. Positions 774-794 are disordered; sequence TSPAPTAATSARTPAGAPPPQ.

Belongs to the peptidase S16 family. As to quaternary structure, homohexamer. Organized in a ring with a central cavity.

Its subcellular location is the cytoplasm. It catalyses the reaction Hydrolysis of proteins in presence of ATP.. Functionally, ATP-dependent serine protease that mediates the selective degradation of mutant and abnormal proteins as well as certain short-lived regulatory proteins. Required for cellular homeostasis and for survival from DNA damage and developmental changes induced by stress. Degrades polypeptides processively to yield small peptide fragments that are 5 to 10 amino acids long. Binds to DNA in a double-stranded, site-specific manner. The chain is Lon protease from Citrifermentans bemidjiense (strain ATCC BAA-1014 / DSM 16622 / JCM 12645 / Bem) (Geobacter bemidjiensis).